We begin with the raw amino-acid sequence, 447 residues long: Rab GDP dissociation inhibitor alpha (447 aa).

Ser427 is subject to Phosphoserine.

The protein belongs to the Rab GDI family. In terms of assembly, interacts with RHOH. Interacts with the non-phosphorylated forms of RAB1A, RAB3A, RAB5A, RAB5B, RAB5C, RAB8A, RAB8B, RAB10, RAB12, RAB35, and RAB43.

The protein localises to the cytoplasm. The protein resides in the golgi apparatus. It localises to the trans-Golgi network. In terms of biological role, regulates the GDP/GTP exchange reaction of most Rab proteins by inhibiting the dissociation of GDP from them, and the subsequent binding of GTP to them. Promotes the dissociation of GDP-bound Rab proteins from the membrane and inhibits their activation. Promotes the dissociation of RAB1A, RAB3A, RAB5A and RAB10 from membranes. This is Rab GDP dissociation inhibitor alpha (GDI1) from Canis lupus familiaris (Dog).